Here is a 49-residue protein sequence, read N- to C-terminus: Large ribosomal subunit protein bL33 (49 aa).

Belongs to the bacterial ribosomal protein bL33 family.

This Thermosipho melanesiensis (strain DSM 12029 / CIP 104789 / BI429) protein is Large ribosomal subunit protein bL33.